Consider the following 400-residue polypeptide: Delta(12) fatty acid desaturase (400 aa).

The chain crosses the membrane as a helical span at residues 91-111 (LAWPAYWIMQGIVCTGIWVLA). A Histidine box-1 motif is present at residues 112–116 (HECGH). Residues 148-152 (HSKHH) carry the Histidine box-2 motif. 3 helical membrane-spanning segments follow: residues 199-219 (IVTL…YLIM), 245-265 (FFDI…LIYA), and 277-297 (YYIV…FLQH). The Histidine box-3 motif lies at 339 to 343 (HVAHH).

This sequence belongs to the fatty acid desaturase type 1 family.

It localises to the membrane. It carries out the reaction (9Z)-octadecenoyl-CoA + 2 Fe(II)-[cytochrome b5] + O2 + 2 H(+) = (9Z,12Z)-octadecadienoyl-CoA + 2 Fe(III)-[cytochrome b5] + 2 H2O. It catalyses the reaction (9Z)-hexadecenoyl-CoA + 2 Fe(II)-[cytochrome b5] + O2 + 2 H(+) = (9Z,12Z)-hexadecadienoyl-CoA + 2 Fe(III)-[cytochrome b5] + 2 H2O. The protein operates within lipid metabolism; polyunsaturated fatty acid biosynthesis. In terms of biological role, catalyzes the desaturation of oleic acid (Delta(9)-18:1) to linoleic acid (Delta(9), Delta(12)-18:2). The chain is Delta(12) fatty acid desaturase from Mortierella alpina (Oleaginous fungus).